A 123-amino-acid polypeptide reads, in one-letter code: Protein Rev (123 aa).

Ser-5 bears the Phosphoserine; by host CK2 mark. The homomultimerization stretch occupies residues 18-26 (IIKTLYQSN). 2 disordered regions span residues 24-50 (QSNP…ARQR) and 79-123 (EGLS…GTKE). The short motif at 34-50 (TRQARKNRRRRWRARQR) is the Nuclear localization signal and RNA-binding (RRE) element. Residues 36–50 (QARKNRRRRWRARQR) are compositionally biased toward basic residues. The Nuclear export signal and binding to XPO1 signature appears at 73-84 (FQLPPLEGLSLD). At Ser-92 the chain carries Phosphoserine; by host. Over residues 93–105 (GTQQPQGTETGVG) the composition is skewed to low complexity.

Belongs to the HIV-1 REV protein family. As to quaternary structure, homomultimer; when bound to the RRE. Multimeric assembly is essential for activity and may involve XPO1. Binds to human KPNB1, XPO1, TNPO1, RANBP5 and IPO7. Interacts with the viral Integrase. Interacts with human KHDRBS1. Interacts with human NAP1; this interaction decreases Rev multimerization and stimulates its activity. Interacts with human DEAD-box helicases DDX3 and DDX24; these interactions may serve for viral RNA export to the cytoplasm and packaging, respectively. Interacts with human PSIP1; this interaction may inhibit HIV-1 DNA integration by promoting dissociation of the Integrase-LEDGF/p75 complex. Post-translationally, asymmetrically arginine dimethylated at one site by host PRMT6. Methylation impairs the RNA-binding activity and export of viral RNA from the nucleus to the cytoplasm. Phosphorylated by protein kinase CK2. Presence of, and maybe binding to the N-terminus of the regulatory beta subunit of CK2 is necessary for CK2-mediated Rev's phosphorylation.

It is found in the host nucleus. The protein resides in the host nucleolus. It localises to the host cytoplasm. In terms of biological role, escorts unspliced or incompletely spliced viral pre-mRNAs (late transcripts) out of the nucleus of infected cells. These pre-mRNAs carry a recognition sequence called Rev responsive element (RRE) located in the env gene, that is not present in fully spliced viral mRNAs (early transcripts). This function is essential since most viral proteins are translated from unspliced or partially spliced pre-mRNAs which cannot exit the nucleus by the pathway used by fully processed cellular mRNAs. Rev itself is translated from a fully spliced mRNA that readily exits the nucleus. Rev's nuclear localization signal (NLS) binds directly to KPNB1/Importin beta-1 without previous binding to KPNA1/Importin alpha-1. KPNB1 binds to the GDP bound form of RAN (Ran-GDP) and targets Rev to the nucleus. In the nucleus, the conversion from Ran-GDP to Ran-GTP dissociates Rev from KPNB1 and allows Rev's binding to the RRE in viral pre-mRNAs. Rev multimerization on the RRE via cooperative assembly exposes its nuclear export signal (NES) to the surface. Rev can then form a complex with XPO1/CRM1 and Ran-GTP, leading to nuclear export of the complex. Conversion from Ran-GTP to Ran-GDP mediates dissociation of the Rev/RRE/XPO1/RAN complex, so that Rev can return to the nucleus for a subsequent round of export. Beside KPNB1, also seems to interact with TNPO1/Transportin-1, RANBP5/IPO5 and IPO7/RANBP7 for nuclear import. The nucleoporin-like HRB/RIP is an essential cofactor that probably indirectly interacts with Rev to release HIV RNAs from the perinuclear region to the cytoplasm. The chain is Protein Rev from Human immunodeficiency virus type 1 group M subtype G (isolate 92NG083) (HIV-1).